A 198-amino-acid polypeptide reads, in one-letter code: Ras-related protein RabH (198 aa).

14 to 21 contacts GTP; that stretch reads GDWNVGKS. An Effector region motif is present at residues 36-44; that stretch reads TKLSMGEHF. GTP-binding positions include 62–66 and 120–123; these read DTSGM and SKFD. Cys195 is modified (cysteine methyl ester). Cys195 carries S-geranylgeranyl cysteine lipidation. The propeptide at 196-198 is removed in mature form; sequence SIN.

This sequence belongs to the small GTPase superfamily. Rab family.

The protein localises to the cell membrane. The protein is Ras-related protein RabH (rabH) of Dictyostelium discoideum (Social amoeba).